Reading from the N-terminus, the 346-residue chain is Ornithine carbamoyltransferase, catabolic (346 aa).

Residues 58–61, N85, R109, and 136–139 contribute to the carbamoyl phosphate site; these read STRT and HPTQ. Residues N168, D239, and 243–244 contribute to the L-ornithine site; that span reads SL. Carbamoyl phosphate-binding positions include 280–281 and R332; that span reads CL.

Belongs to the aspartate/ornithine carbamoyltransferase superfamily. OTCase family.

The protein resides in the cytoplasm. The enzyme catalyses carbamoyl phosphate + L-ornithine = L-citrulline + phosphate + H(+). It participates in amino-acid degradation; L-arginine degradation via ADI pathway; carbamoyl phosphate from L-arginine: step 2/2. Reversibly catalyzes the transfer of the carbamoyl group from carbamoyl phosphate (CP) to the N(epsilon) atom of ornithine (ORN) to produce L-citrulline. In Mycoplasma pneumoniae (strain ATCC 29342 / M129 / Subtype 1) (Mycoplasmoides pneumoniae), this protein is Ornithine carbamoyltransferase, catabolic.